The chain runs to 123 residues: Peptide methionine sulfoxide reductase MsrA (123 aa).

The active site involves Cys8.

This sequence belongs to the MsrA Met sulfoxide reductase family.

The catalysed reaction is L-methionyl-[protein] + [thioredoxin]-disulfide + H2O = L-methionyl-(S)-S-oxide-[protein] + [thioredoxin]-dithiol. It carries out the reaction [thioredoxin]-disulfide + L-methionine + H2O = L-methionine (S)-S-oxide + [thioredoxin]-dithiol. Has an important function as a repair enzyme for proteins that have been inactivated by oxidation. Catalyzes the reversible oxidation-reduction of methionine sulfoxide in proteins to methionine. The polypeptide is Peptide methionine sulfoxide reductase MsrA (Thermoactinomyces vulgaris).